A 275-amino-acid polypeptide reads, in one-letter code: Taurine transport system permease protein TauC (275 aa).

Transmembrane regions (helical) follow at residues 20–42 (LSRQ…WTVA), 87–107 (IMLA…AMGL), 124–144 (PVPP…GETS), 146–166 (ILLI…AGVK), 186–206 (VLWF…LRIG), 209–229 (VGWS…LGFM), and 236–256 (FLAT…AFLL). An ABC transmembrane type-1 domain is found at 80-264 (LAASLTRIML…LLELGLRALQ (185 aa)).

It belongs to the binding-protein-dependent transport system permease family. CysTW subfamily.

It localises to the cell inner membrane. Its function is as follows. Part of a binding-protein-dependent transport system for taurine. Probably responsible for the translocation of the substrate across the membrane. In Escherichia coli (strain K12), this protein is Taurine transport system permease protein TauC (tauC).